The following is a 192-amino-acid chain: Erythropoietin (192 aa).

Residues 1–26 (MGVPERPTLLLLLSLLLIPLGLPVLC) form the signal peptide. Cysteine 33 and cysteine 187 are disulfide-bonded. Asparagine 50, asparagine 64, and asparagine 109 each carry an N-linked (GlcNAc...) asparagine glycan.

Belongs to the EPO/TPO family. In terms of tissue distribution, produced by kidney or liver of adult mammals and by liver of fetal or neonatal mammals.

The protein resides in the secreted. Functionally, hormone involved in the regulation of erythrocyte proliferation and differentiation and the maintenance of a physiological level of circulating erythrocyte mass. Binds to EPOR leading to EPOR dimerization and JAK2 activation thereby activating specific downstream effectors, including STAT1 and STAT3. The polypeptide is Erythropoietin (Epo) (Mus musculus (Mouse)).